Reading from the N-terminus, the 142-residue chain is Universal stress protein C (142 aa).

The protein belongs to the universal stress protein A family.

The protein resides in the cytoplasm. In terms of biological role, required for resistance to DNA-damaging agents. The protein is Universal stress protein C (uspC) of Salmonella typhimurium (strain LT2 / SGSC1412 / ATCC 700720).